The primary structure comprises 519 residues: Nitrogen fixation regulatory protein (519 aa).

The PAS 1 domain maps to 23 to 93; sequence LPEIFRQTVE…QALWGRLAQK (71 aa). A PAC domain is found at 94–148; the sequence is KPWSGVLVNRRKDKTLYLAELTVAPVLNEAGETIYYLGMHRDTSELHELEQRVNN. In terms of domain architecture, PAS 2 spans 151 to 217; sequence LMIEAVVNAA…FETLENQGSA (67 aa). The 216-residue stretch at 302–517 folds into the Histidine kinase domain; the sequence is AAIHRLQGPV…RIVVELPFSA (216 aa). H305 is modified (phosphohistidine; by autocatalysis).

It depends on FAD as a cofactor.

The catalysed reaction is ATP + protein L-histidine = ADP + protein N-phospho-L-histidine.. Its function is as follows. Required for the inhibition of NifA activity in response to oxygen and low level of fixed nitrogen. The polypeptide is Nitrogen fixation regulatory protein (nifL) (Azotobacter vinelandii).